Consider the following 604-residue polypeptide: Protein hemingway (604 aa).

Disordered stretches follow at residues Met-1–His-70, Asn-103–Gln-309, Ser-359–Ile-387, and Thr-544–Asp-585. Acidic residues-rich tracts occupy residues Ser-8 to Pro-38, Glu-135 to Gln-183, Asp-194 to Pro-214, and Glu-288 to Gln-300. A compositionally biased stretch (low complexity) spans Glu-368–Ser-379.

This sequence belongs to the CFAP97 family. As to expression, detected in ciliated sensory neurons at all stages of development, and in adult testis.

It is found in the cell projection. The protein localises to the cilium. It localises to the perikaryon. The protein resides in the cytoplasm. In terms of biological role, involved in assembly and/or maintenance of motile cilia. Required during spermatogenesis for axoneme elongation. Necessary for optimal function of the chordotonal (hearing) organs. This is Protein hemingway from Drosophila melanogaster (Fruit fly).